Here is a 157-residue protein sequence, read N- to C-terminus: Putative pre-16S rRNA nuclease (157 aa).

Belongs to the YqgF nuclease family.

It localises to the cytoplasm. Functionally, could be a nuclease involved in processing of the 5'-end of pre-16S rRNA. This Parasynechococcus marenigrum (strain WH8102) protein is Putative pre-16S rRNA nuclease.